We begin with the raw amino-acid sequence, 230 residues long: Flagellar L-ring protein (230 aa).

Positions Met1 to Gly26 are cleaved as a signal peptide. A lipid anchor (N-palmitoyl cysteine) is attached at Cys27. A lipid anchor (S-diacylglycerol cysteine) is attached at Cys27.

Belongs to the FlgH family. In terms of assembly, the basal body constitutes a major portion of the flagellar organelle and consists of four rings (L,P,S, and M) mounted on a central rod.

It localises to the cell outer membrane. The protein resides in the bacterial flagellum basal body. In terms of biological role, assembles around the rod to form the L-ring and probably protects the motor/basal body from shearing forces during rotation. In Burkholderia lata (strain ATCC 17760 / DSM 23089 / LMG 22485 / NCIMB 9086 / R18194 / 383), this protein is Flagellar L-ring protein.